The sequence spans 46 residues: Iota-conotoxin-like R11.7 (46 aa).

Residues Pro-2 and Pro-11 each carry the 4-hydroxyproline modification. 4 disulfide bridges follow: Cys-5-Cys-19, Cys-12-Cys-22, Cys-18-Cys-27, and Cys-21-Cys-38. Pro-29 is modified (4-hydroxyproline). Position 44 is a D-phenylalanine (Phe-44).

It belongs to the conotoxin I1 superfamily. In terms of tissue distribution, expressed by the venom duct.

It localises to the secreted. Its function is as follows. Iota-conotoxins bind to voltage-gated sodium channels (Nav) and act as agonists by shifting the voltage-dependence of activation to more hyperpolarized levels. Produces general excitatory symptoms. In Conus radiatus (Rayed cone), this protein is Iota-conotoxin-like R11.7.